The chain runs to 181 residues: Large ribosomal subunit protein uL5 (181 aa).

Belongs to the universal ribosomal protein uL5 family. In terms of assembly, part of the 50S ribosomal subunit; part of the 5S rRNA/L5/L18/L25 subcomplex. Contacts the 5S rRNA and the P site tRNA. Forms a bridge to the 30S subunit in the 70S ribosome.

This is one of the proteins that bind and probably mediate the attachment of the 5S RNA into the large ribosomal subunit, where it forms part of the central protuberance. In the 70S ribosome it contacts protein S13 of the 30S subunit (bridge B1b), connecting the 2 subunits; this bridge is implicated in subunit movement. Contacts the P site tRNA; the 5S rRNA and some of its associated proteins might help stabilize positioning of ribosome-bound tRNAs. This chain is Large ribosomal subunit protein uL5, found in Helicobacter pylori (strain HPAG1).